The sequence spans 329 residues: D-lactate dehydrogenase (329 aa).

NAD(+) contacts are provided by residues 154 to 155 (KI), aspartate 174, 205 to 206 (CP), asparagine 211, 232 to 234 (TSR), and aspartate 258. Residue arginine 234 is part of the active site. Residue glutamate 263 is part of the active site. Histidine 295 acts as the Proton donor in catalysis.

This sequence belongs to the D-isomer specific 2-hydroxyacid dehydrogenase family.

It carries out the reaction (R)-lactate + NAD(+) = pyruvate + NADH + H(+). Functionally, fermentative lactate dehydrogenase. The protein is D-lactate dehydrogenase (ldhA) of Escherichia coli (strain K12).